Reading from the N-terminus, the 172-residue chain is GTP-dependent dephospho-CoA kinase (172 aa).

D49, V50, V51, D68, K70, and E120 together coordinate GTP.

It belongs to the GTP-dependent DPCK family.

It catalyses the reaction 3'-dephospho-CoA + GTP = GDP + CoA + H(+). Its pathway is cofactor biosynthesis; coenzyme A biosynthesis. Its function is as follows. Catalyzes the GTP-dependent phosphorylation of the 3'-hydroxyl group of dephosphocoenzyme A to form coenzyme A (CoA). This chain is GTP-dependent dephospho-CoA kinase, found in Pyrobaculum arsenaticum (strain DSM 13514 / JCM 11321 / PZ6).